Reading from the N-terminus, the 316-residue chain is UDP-N-acetylenolpyruvoylglucosamine reductase (316 aa).

The FAD-binding PCMH-type domain occupies 27–225 (VGGKAERFYR…KTAINALLKK (199 aa)). Arg-190 is an active-site residue. Ser-239 functions as the Proton donor in the catalytic mechanism. The active site involves Glu-309.

This sequence belongs to the MurB family. Requires FAD as cofactor.

The protein localises to the cytoplasm. It catalyses the reaction UDP-N-acetyl-alpha-D-muramate + NADP(+) = UDP-N-acetyl-3-O-(1-carboxyvinyl)-alpha-D-glucosamine + NADPH + H(+). It participates in cell wall biogenesis; peptidoglycan biosynthesis. In terms of biological role, cell wall formation. The polypeptide is UDP-N-acetylenolpyruvoylglucosamine reductase (Coxiella burnetii (strain CbuG_Q212) (Coxiella burnetii (strain Q212))).